The chain runs to 296 residues: NAD kinase (296 aa).

Residue Asp72 is the Proton acceptor of the active site. NAD(+)-binding positions include 72–73, 146–147, Arg157, Lys174, Asp176, 187–192, and Gln247; these read DG, ND, and TAYALS.

This sequence belongs to the NAD kinase family. It depends on a divalent metal cation as a cofactor.

The protein localises to the cytoplasm. The enzyme catalyses NAD(+) + ATP = ADP + NADP(+) + H(+). In terms of biological role, involved in the regulation of the intracellular balance of NAD and NADP, and is a key enzyme in the biosynthesis of NADP. Catalyzes specifically the phosphorylation on 2'-hydroxyl of the adenosine moiety of NAD to yield NADP. This Pseudomonas putida (strain GB-1) protein is NAD kinase.